The following is a 360-amino-acid chain: Glucan endo-1,3-beta-glucosidase B (360 aa).

Positions 1 to 25 are cleaved as a signal peptide; that stretch reads MATSQIAIIVLLGLLVATNIHITEA. Position 26 is a pyrrolidone carboxylic acid (Q26). E120 functions as the Proton donor in the catalytic mechanism. Catalysis depends on E265, which acts as the Nucleophile. Residues 341–360 constitute a propeptide, removed in mature form; that stretch reads VSERVWDITNSTASSLTSEI. N-linked (GlcNAc...) asparagine glycosylation occurs at N350.

Belongs to the glycosyl hydrolase 17 family.

The protein resides in the vacuole. It carries out the reaction Hydrolysis of (1-&gt;3)-beta-D-glucosidic linkages in (1-&gt;3)-beta-D-glucans.. In terms of biological role, implicated in the defense of plants against pathogens. The sequence is that of Glucan endo-1,3-beta-glucosidase B from Solanum lycopersicum (Tomato).